The primary structure comprises 131 residues: Profilin-3 (131 aa).

Cysteine 13 and cysteine 115 are disulfide-bonded. The Involved in PIP2 interaction signature appears at 81 to 97 (AVIRGKKGSGGITIKKT). Phosphothreonine is present on threonine 111.

This sequence belongs to the profilin family. Occurs in many kinds of cells as a complex with monomeric actin in a 1:1 ratio. Post-translationally, phosphorylated by MAP kinases.

The protein resides in the cytoplasm. It localises to the cytoskeleton. In terms of biological role, binds to actin and affects the structure of the cytoskeleton. At high concentrations, profilin prevents the polymerization of actin, whereas it enhances it at low concentrations. This Olea europaea (Common olive) protein is Profilin-3.